A 546-amino-acid chain; its full sequence is CTP synthase (546 aa).

Residues 1–266 form an amidoligase domain region; sequence MTTNYIFVTG…DDLVCQRFGI (266 aa). S14 contacts CTP. S14 serves as a coordination point for UTP. Residues 15-20 and D72 each bind ATP; that span reads SLGKGI. Residues D72 and E140 each contribute to the Mg(2+) site. CTP is bound by residues 147–149, 187–192, and K223; these read DIE and KTKPTQ. Residues 187 to 192 and K223 each bind UTP; that span reads KTKPTQ. 239–241 lines the ATP pocket; that stretch reads KDV. The Glutamine amidotransferase type-1 domain maps to 291–542; it reads VIGMVGKYIE…VKAAGESVRG (252 aa). G352 serves as a coordination point for L-glutamine. C379 functions as the Nucleophile; for glutamine hydrolysis in the catalytic mechanism. L-glutamine-binding positions include 380 to 383, E403, and R470; that span reads LGMQ. Active-site residues include H515 and E517.

It belongs to the CTP synthase family. Homotetramer.

The catalysed reaction is UTP + L-glutamine + ATP + H2O = CTP + L-glutamate + ADP + phosphate + 2 H(+). It catalyses the reaction L-glutamine + H2O = L-glutamate + NH4(+). It carries out the reaction UTP + NH4(+) + ATP = CTP + ADP + phosphate + 2 H(+). The protein operates within pyrimidine metabolism; CTP biosynthesis via de novo pathway; CTP from UDP: step 2/2. Allosterically activated by GTP, when glutamine is the substrate; GTP has no effect on the reaction when ammonia is the substrate. The allosteric effector GTP functions by stabilizing the protein conformation that binds the tetrahedral intermediate(s) formed during glutamine hydrolysis. Inhibited by the product CTP, via allosteric rather than competitive inhibition. Catalyzes the ATP-dependent amination of UTP to CTP with either L-glutamine or ammonia as the source of nitrogen. Regulates intracellular CTP levels through interactions with the four ribonucleotide triphosphates. The protein is CTP synthase of Aliivibrio fischeri (strain MJ11) (Vibrio fischeri).